A 445-amino-acid chain; its full sequence is MIEKIINQYQKKLFLIAYSGGIDSTVLLYKMLKIKEKNPQIKIRAIHINHNLHPSSKKWEEHCIKICHKYKIPIITKEIKILLKKNIEETLRIKRYNTIYNYLLNDEILLTGHHLNDQCETLFLSLKRGSGPTGLSGMSIENFLGKKRIVRPFLTKTKKELQKWACENNLESIEDFSNFNIDYDRNFIRHKLIPILEQRWPFFLKNCFRTTVICREETKLKNIFLKEKIQNLINFDESLNIQNFKNINKEVCKALIRYWISLKNIKMPSYKTIECIYNEIICSKKDSNPKIIIDKNEIRRYKTSLYFIKIQKDISNIFLFWHNTDKKLLLPEDLGYLIKNDKGFILPSPKKNELINIRFQLEGKILILGREKRRKIKKIWQEHNIPPWLRNKIPLLFYNNRFISAIGLFVIKEKIINKEKEIQKNWKISWINNVHFNRKNFFLFY.

19–24 lines the ATP pocket; sequence SGGIDS.

It belongs to the tRNA(Ile)-lysidine synthase family.

The protein localises to the cytoplasm. The catalysed reaction is cytidine(34) in tRNA(Ile2) + L-lysine + ATP = lysidine(34) in tRNA(Ile2) + AMP + diphosphate + H(+). Functionally, ligates lysine onto the cytidine present at position 34 of the AUA codon-specific tRNA(Ile) that contains the anticodon CAU, in an ATP-dependent manner. Cytidine is converted to lysidine, thus changing the amino acid specificity of the tRNA from methionine to isoleucine. This is tRNA(Ile)-lysidine synthase from Buchnera aphidicola subsp. Schizaphis graminum (strain Sg).